A 296-amino-acid chain; its full sequence is Lipoyl synthase (296 aa).

7 residues coordinate [4Fe-4S] cluster: cysteine 34, cysteine 39, cysteine 45, cysteine 60, cysteine 64, cysteine 67, and serine 276. Positions 46 to 265 (WGEGTATFMI…GEVALSMGFK (220 aa)) constitute a Radical SAM core domain.

The protein belongs to the radical SAM superfamily. Lipoyl synthase family. It depends on [4Fe-4S] cluster as a cofactor.

Its subcellular location is the cytoplasm. The enzyme catalyses [[Fe-S] cluster scaffold protein carrying a second [4Fe-4S](2+) cluster] + N(6)-octanoyl-L-lysyl-[protein] + 2 oxidized [2Fe-2S]-[ferredoxin] + 2 S-adenosyl-L-methionine + 4 H(+) = [[Fe-S] cluster scaffold protein] + N(6)-[(R)-dihydrolipoyl]-L-lysyl-[protein] + 4 Fe(3+) + 2 hydrogen sulfide + 2 5'-deoxyadenosine + 2 L-methionine + 2 reduced [2Fe-2S]-[ferredoxin]. It functions in the pathway protein modification; protein lipoylation via endogenous pathway; protein N(6)-(lipoyl)lysine from octanoyl-[acyl-carrier-protein]: step 2/2. In terms of biological role, catalyzes the radical-mediated insertion of two sulfur atoms into the C-6 and C-8 positions of the octanoyl moiety bound to the lipoyl domains of lipoate-dependent enzymes, thereby converting the octanoylated domains into lipoylated derivatives. The chain is Lipoyl synthase from Pyrobaculum arsenaticum (strain DSM 13514 / JCM 11321 / PZ6).